Reading from the N-terminus, the 344-residue chain is L-threonine 3-dehydrogenase (344 aa).

Cys-42 contacts Zn(2+). Catalysis depends on charge relay system residues Thr-44 and His-47. Zn(2+) is bound by residues His-67, Glu-68, Cys-97, Cys-100, Cys-103, and Cys-111. NAD(+)-binding positions include Ile-179, Asp-199, Arg-204, 266 to 268, and 290 to 291; these read LGI and IY.

This sequence belongs to the zinc-containing alcohol dehydrogenase family. In terms of assembly, homotetramer. It depends on Zn(2+) as a cofactor.

The protein localises to the cytoplasm. The enzyme catalyses L-threonine + NAD(+) = (2S)-2-amino-3-oxobutanoate + NADH + H(+). Its pathway is amino-acid degradation; L-threonine degradation via oxydo-reductase pathway; glycine from L-threonine: step 1/2. Functionally, catalyzes the NAD(+)-dependent oxidation of L-threonine to 2-amino-3-ketobutyrate. The sequence is that of L-threonine 3-dehydrogenase from Mesorhizobium japonicum (strain LMG 29417 / CECT 9101 / MAFF 303099) (Mesorhizobium loti (strain MAFF 303099)).